The primary structure comprises 446 residues: MEGIILAAGKGTRMKSDLPKVVHEVAEKPMVLRVYEALVGAGVKRVVAVVGYRKEKVEEILRGRAVIAVQEEQLGTGHAALVAMPYVEDENVIIVPGDTPLLKASTLQALIKKHLETGAYATVLTCFLSNPYGYGRIVRDGYGKIIKIVEEKDATLEEKQIAEVNTGIYCFNTKILKEILPLLKAENAQKEYYLTDVIPLLLERGKVVETITIQDETEVYGVNDRVQLARLTKGVYRRKAEALMQEGVTIIDPETVYIGEEVVVGSDTVIYPNTYLEGKTVIGSGCRLGPNTRITDSVIGNNTEITFSVIIQARVGDEVNVGPFAYLRPGTEIANGVKIGDFVEIKKSFIGEGSKVPHLSYIGDAVVGKGVNIGAGTITCNYDGKNKWETVIEDGAFIGSNTNLVAPIKIGKNAVVGAGSTLTEDVPEKALAIARSRQVNKEDYVK.

A pyrophosphorylase region spans residues 1–225 (MEGIILAAGK…ETEVYGVNDR (225 aa)). Residues 6-9 (LAAG), K20, Q70, and 75-76 (GT) each bind UDP-N-acetyl-alpha-D-glucosamine. D98 is a Mg(2+) binding site. Residues G135, E150, N165, and N223 each contribute to the UDP-N-acetyl-alpha-D-glucosamine site. N223 contacts Mg(2+). The linker stretch occupies residues 226–246 (VQLARLTKGVYRRKAEALMQE). The tract at residues 247–446 (GVTIIDPETV…RQVNKEDYVK (200 aa)) is N-acetyltransferase. Positions 328 and 346 each coordinate UDP-N-acetyl-alpha-D-glucosamine. The Proton acceptor role is filled by H358. Y361 and N372 together coordinate UDP-N-acetyl-alpha-D-glucosamine. Residues A375, 381-382 (NY), S400, A418, and R435 each bind acetyl-CoA.

The protein in the N-terminal section; belongs to the N-acetylglucosamine-1-phosphate uridyltransferase family. In the C-terminal section; belongs to the transferase hexapeptide repeat family. As to quaternary structure, homotrimer. The cofactor is Mg(2+).

It is found in the cytoplasm. It carries out the reaction alpha-D-glucosamine 1-phosphate + acetyl-CoA = N-acetyl-alpha-D-glucosamine 1-phosphate + CoA + H(+). It catalyses the reaction N-acetyl-alpha-D-glucosamine 1-phosphate + UTP + H(+) = UDP-N-acetyl-alpha-D-glucosamine + diphosphate. It participates in nucleotide-sugar biosynthesis; UDP-N-acetyl-alpha-D-glucosamine biosynthesis; N-acetyl-alpha-D-glucosamine 1-phosphate from alpha-D-glucosamine 6-phosphate (route II): step 2/2. It functions in the pathway nucleotide-sugar biosynthesis; UDP-N-acetyl-alpha-D-glucosamine biosynthesis; UDP-N-acetyl-alpha-D-glucosamine from N-acetyl-alpha-D-glucosamine 1-phosphate: step 1/1. Its pathway is bacterial outer membrane biogenesis; LPS lipid A biosynthesis. Functionally, catalyzes the last two sequential reactions in the de novo biosynthetic pathway for UDP-N-acetylglucosamine (UDP-GlcNAc). The C-terminal domain catalyzes the transfer of acetyl group from acetyl coenzyme A to glucosamine-1-phosphate (GlcN-1-P) to produce N-acetylglucosamine-1-phosphate (GlcNAc-1-P), which is converted into UDP-GlcNAc by the transfer of uridine 5-monophosphate (from uridine 5-triphosphate), a reaction catalyzed by the N-terminal domain. This chain is Bifunctional protein GlmU, found in Carboxydothermus hydrogenoformans (strain ATCC BAA-161 / DSM 6008 / Z-2901).